The primary structure comprises 1063 residues: DNA-directed RNA polymerase subunit beta (1063 aa).

Belongs to the RNA polymerase beta chain family. As to quaternary structure, in plastids the minimal PEP RNA polymerase catalytic core is composed of four subunits: alpha, beta, beta', and beta''. When a (nuclear-encoded) sigma factor is associated with the core the holoenzyme is formed, which can initiate transcription.

It is found in the plastid. The protein resides in the chloroplast. It carries out the reaction RNA(n) + a ribonucleoside 5'-triphosphate = RNA(n+1) + diphosphate. Functionally, DNA-dependent RNA polymerase catalyzes the transcription of DNA into RNA using the four ribonucleoside triphosphates as substrates. This chain is DNA-directed RNA polymerase subunit beta, found in Zygnema circumcarinatum (Green alga).